The chain runs to 382 residues: MQNAAPRLTFTLRDEERLMMKIGVFVPIGNNGWLISTHAPQYMPTFELNKAIVQKAEHYHFDFALSMIKLRGFGGKTEFWDHNLESFTLMAGLAAVTSRIQIYATAATLTLPPAIVARMAATIDSISGGRFGVNLVTGWQKPEYEQMGIWPGDDYFSRRYDYLTEYVQVLRDLWGTGKSDFKGDFFTMNDCRVSPQPSVPMKVICAGQSDAGMAFSAQYADFNFCFGKGVNTPTAFAPTAARMKQAAEQTGRDVGSYVLFMVIADETDDAARAKWEHYKAGADEEALSWLTEQSQKDTRSGTDTNVRQMADPTSAVNINMGTLVGSYASVARMLDEVASVPGAEGVLLTFDDFLSGIETFGERIQPLMQCRAHLPVLTQEVA.

Residues 68–69, asparagine 134, glutamate 143, 159–160, and serine 209 contribute to the FMN site; these read IK and RY.

It belongs to the NtaA/SnaA/DszA monooxygenase family. RutA subfamily.

The enzyme catalyses uracil + FMNH2 + NADH + O2 = (Z)-3-ureidoacrylate + FMN + NAD(+) + H2O + H(+). The catalysed reaction is thymine + FMNH2 + NADH + O2 = (Z)-2-methylureidoacrylate + FMN + NAD(+) + H2O + H(+). Functionally, catalyzes the pyrimidine ring opening between N-3 and C-4 by an unusual flavin hydroperoxide-catalyzed mechanism, adding oxygen atoms in the process to yield ureidoacrylate peracid, that immediately reacts with FMN forming ureidoacrylate and FMN-N(5)-oxide. The FMN-N(5)-oxide reacts spontaneously with NADH to produce FMN. Requires the flavin reductase RutF to regenerate FMN in vivo. This is Pyrimidine monooxygenase RutA (rutA) from Escherichia coli O157:H7.